A 361-amino-acid chain; its full sequence is Chorismate synthase (361 aa).

Arginine 48 and arginine 54 together coordinate NADP(+). Residues 125 to 127 (RSS), 238 to 239 (NA), glycine 278, 293 to 297 (KPTSS), and arginine 319 each bind FMN.

This sequence belongs to the chorismate synthase family. In terms of assembly, homotetramer. It depends on FMNH2 as a cofactor.

It carries out the reaction 5-O-(1-carboxyvinyl)-3-phosphoshikimate = chorismate + phosphate. Its pathway is metabolic intermediate biosynthesis; chorismate biosynthesis; chorismate from D-erythrose 4-phosphate and phosphoenolpyruvate: step 7/7. In terms of biological role, catalyzes the anti-1,4-elimination of the C-3 phosphate and the C-6 proR hydrogen from 5-enolpyruvylshikimate-3-phosphate (EPSP) to yield chorismate, which is the branch point compound that serves as the starting substrate for the three terminal pathways of aromatic amino acid biosynthesis. This reaction introduces a second double bond into the aromatic ring system. The chain is Chorismate synthase from Vibrio campbellii (strain ATCC BAA-1116).